Reading from the N-terminus, the 102-residue chain is Aspartyl/glutamyl-tRNA(Asn/Gln) amidotransferase subunit C (102 aa).

This sequence belongs to the GatC family. As to quaternary structure, heterotrimer of A, B and C subunits.

It carries out the reaction L-glutamyl-tRNA(Gln) + L-glutamine + ATP + H2O = L-glutaminyl-tRNA(Gln) + L-glutamate + ADP + phosphate + H(+). It catalyses the reaction L-aspartyl-tRNA(Asn) + L-glutamine + ATP + H2O = L-asparaginyl-tRNA(Asn) + L-glutamate + ADP + phosphate + 2 H(+). Allows the formation of correctly charged Asn-tRNA(Asn) or Gln-tRNA(Gln) through the transamidation of misacylated Asp-tRNA(Asn) or Glu-tRNA(Gln) in organisms which lack either or both of asparaginyl-tRNA or glutaminyl-tRNA synthetases. The reaction takes place in the presence of glutamine and ATP through an activated phospho-Asp-tRNA(Asn) or phospho-Glu-tRNA(Gln). The chain is Aspartyl/glutamyl-tRNA(Asn/Gln) amidotransferase subunit C from Bordetella pertussis (strain Tohama I / ATCC BAA-589 / NCTC 13251).